The primary structure comprises 322 residues: Putative membrane-bound redox modulator Alx (322 aa).

Residues 1–6 (MNTVGT) lie on the Periplasmic side of the membrane. The helical transmembrane segment at 7 to 27 (PLLWGGFAVVVVIMLSIDLLL) threads the bilayer. Residues 28–43 (QGRRGAHAMSMKQAAG) lie on the Cytoplasmic side of the membrane. A helical membrane pass occupies residues 44–64 (WSILWVTLSLLFNAAFWWYLA). The Periplasmic segment spans residues 65-89 (ETQGREVADPQALAFLTGYLIEKSL). Residues 90–110 (AVDNVFVWLMLFSYFSVPPAL) form a helical membrane-spanning segment. Topologically, residues 111 to 113 (QRR) are cytoplasmic. The chain crosses the membrane as a helical span at residues 114 to 134 (VLVYGVLGAIVLRTIMIFAGT). W135 is a topological domain (periplasmic). The helical transmembrane segment at 136-156 (LITQFEWLLYVFGAFLLFTGV) threads the bilayer. Topologically, residues 157–198 (KMALAKEDESGIGEKPMVRWLRGHLRMTDTIENEHFFVRKNG) are cytoplasmic. A helical transmembrane segment spans residues 199–219 (LLYATPLLLVLIMVEFSDVIF). Residues 220–225 (AVDSIP) lie on the Periplasmic side of the membrane. A helical transmembrane segment spans residues 226-246 (AIFAVTTDPFIVLTSNLFAIL). Residues 247 to 261 (GLRAMYFLLSGVAER) are Cytoplasmic-facing. The chain crosses the membrane as a helical span at residues 262–282 (FSMLKYGLAVILVFIGIKMLI). Over 283-286 (VDFY) the chain is Periplasmic. Residues 287–307 (HIPIAISLGVVFGILTITLVI) traverse the membrane as a helical segment. Residues 308–321 (NTWVNHQRDKKLRA) lie on the Cytoplasmic side of the membrane.

Belongs to the TerC family.

The protein localises to the cell inner membrane. Functionally, has been proposed to be a redox modulator. The protein is Putative membrane-bound redox modulator Alx (alx) of Salmonella typhi.